Consider the following 1429-residue polypeptide: Autophagy-related protein 11 (1429 aa).

Coiled coils occupy residues 540 to 579 (GDDDLLQSLQEDKGKLENKLKTAESRVRRLEDLLHRQSQA), 616 to 808 (EGID…LDDH), 842 to 985 (TLVE…HMNS), and 1106 to 1135 (RRIKEVEHMARKWQKEARSYRERAHILQKD). Positions 574–622 (HRQSQASRPGNLFQPQGSQQRERVNSASSVRSSRFDDRRRSSEGIDPLM) are disordered. The span at 575–592 (RQSQASRPGNLFQPQGSQ) shows a compositional bias: polar residues. Residues 606–616 (SRFDDRRRSSE) are compositionally biased toward basic and acidic residues. Disordered regions lie at residues 1205–1224 (SKSLQPSSETESINDEENDN) and 1333–1405 (RAHN…PTRR). Polar residues-rich tracts occupy residues 1206 to 1215 (KSLQPSSETE) and 1333 to 1362 (RAHNADTPSGTSPTQGGHLTSTNASLGQKN). A compositionally biased stretch (basic and acidic residues) spans 1384-1398 (KADEQPRSVVQREDS).

It belongs to the ATG11 family. As to quaternary structure, homodimer and potential homooligomers. Interacts with ATG1 kinase and the ATG19 and ATG34 cargo protein transporters. Interacts with ATG9, ATG17 and ATG20.

The protein resides in the preautophagosomal structure membrane. It localises to the vacuole membrane. Involved in cytoplasm to vacuole transport (Cvt), pexophagy, mitophagy and nucleophagy. Recruits mitochondria for their selective degradation via autophagy (mitophagy) during starvation, through its interaction with ATG32. Works as scaffold proteins that recruit ATG proteins to the pre-autophagosome (PAS), the site of vesicle/autophagosome formation. Required for ATG9 anterograde transport from the mitochondria to the PAS. Also recruits the ATG19-prAPE1 complex to the PAS. Required for the Cvt vesicles completion. Autophagy is required for proper vegetative growth, asexual/sexual reproduction, and full virulence. Autophagy is particularly involved in the biosynthesis of deoxynivalenol (DON), an important virulence determinant. The protein is Autophagy-related protein 11 of Gibberella zeae (strain ATCC MYA-4620 / CBS 123657 / FGSC 9075 / NRRL 31084 / PH-1) (Wheat head blight fungus).